The chain runs to 639 residues: Alpha-dioxygenase 1 (639 aa).

H163 serves as the catalytic Proton acceptor. D164 lines the Ca(2+) pocket. H168 provides a ligand contact to heme b. T216, W218, D220, and S222 together coordinate Ca(2+). Heme b contacts are provided by H389, R486, and R490.

This sequence belongs to the peroxidase family. Forms monomers in solution. The cofactor is heme b. Requires Ca(2+) as cofactor. As to expression, expressed in roots (epiderm), mature flowers (e.g. anthers) and senescing leaves.

It localises to the lipid droplet. The catalysed reaction is a 1,2-saturated fatty acid + O2 = a (2R)-2-hydroperoxy fatty acid. The enzyme catalyses (9Z,12Z,15Z)-octadecatrienoate + O2 = (R)-2-hydroperoxy-(9Z,12Z,15Z)-octadecatrienoate. It carries out the reaction hexadecanoate + O2 = (2R)-2-hydroperoxyhexadecanoate. It catalyses the reaction (9Z,12Z)-octadecadienoate + O2 = (2R,9Z,12Z)-2-hydroperoxyoctadecadienoate. The catalysed reaction is (9Z)-octadecenoate + O2 = (2R,9Z)-2-hydroperoxyoctadecenoate. Alpha-dioxygenase that catalyzes the primary oxygenation step of a variety of 14-20 carbon fatty acids, containing up to three unsaturated bonds, into their corresponding 2R-hydroperoxides. Involved in the production of oxylipins that function in cell signaling, wound healing, and protection from infection. Mediates protection against oxidative stress and cell death, probably by generating some lipid-derived molecules. Promotes local and systemic plant defense in a salicylic acid (SA)-dependent manner, including the establishment of systemic acquired resistance (SAR) in response to incompatible interaction. Involved in a negative regulation of abscisic acid (ABA)-mediated signaling pathway. This chain is Alpha-dioxygenase 1, found in Arabidopsis thaliana (Mouse-ear cress).